The chain runs to 197 residues: dITP/XTP pyrophosphatase (197 aa).

Substrate is bound at residue Thr-8–Lys-13. Glu-40 and Asp-69 together coordinate Mg(2+). The active-site Proton acceptor is Asp-69. Substrate is bound by residues Ser-70, Phe-154–Asp-157, Lys-177, and His-182–Arg-183.

Belongs to the HAM1 NTPase family. As to quaternary structure, homodimer. Mg(2+) serves as cofactor.

The catalysed reaction is XTP + H2O = XMP + diphosphate + H(+). It catalyses the reaction dITP + H2O = dIMP + diphosphate + H(+). The enzyme catalyses ITP + H2O = IMP + diphosphate + H(+). Its function is as follows. Pyrophosphatase that catalyzes the hydrolysis of nucleoside triphosphates to their monophosphate derivatives, with a high preference for the non-canonical purine nucleotides XTP (xanthosine triphosphate), dITP (deoxyinosine triphosphate) and ITP. Seems to function as a house-cleaning enzyme that removes non-canonical purine nucleotides from the nucleotide pool, thus preventing their incorporation into DNA/RNA and avoiding chromosomal lesions. The chain is dITP/XTP pyrophosphatase from Photorhabdus laumondii subsp. laumondii (strain DSM 15139 / CIP 105565 / TT01) (Photorhabdus luminescens subsp. laumondii).